A 258-amino-acid polypeptide reads, in one-letter code: Phosphonates import ATP-binding protein PhnC 3 (258 aa).

Residues I2 to I246 form the ABC transporter domain. G35–S42 contacts ATP.

Belongs to the ABC transporter superfamily. Phosphonates importer (TC 3.A.1.9.1) family. As to quaternary structure, the complex is composed of two ATP-binding proteins (PhnC), two transmembrane proteins (PhnE) and a solute-binding protein (PhnD).

Its subcellular location is the cell membrane. It catalyses the reaction phosphonate(out) + ATP + H2O = phosphonate(in) + ADP + phosphate + H(+). In terms of biological role, part of the ABC transporter complex PhnCDE involved in phosphonates import. Responsible for energy coupling to the transport system. The chain is Phosphonates import ATP-binding protein PhnC 3 from Halalkalibacterium halodurans (strain ATCC BAA-125 / DSM 18197 / FERM 7344 / JCM 9153 / C-125) (Bacillus halodurans).